The primary structure comprises 400 residues: Tyrosine--tRNA ligase (400 aa).

The short motif at 42–51 (PTAPDLHLGH) is the 'HIGH' region element. The 'KMSKS' region signature appears at 226–230 (KMSKS). Lysine 229 contributes to the ATP binding site. One can recognise an S4 RNA-binding domain in the interval 339–399 (FSISYILRRA…GKKKIAQIFV (61 aa)).

This sequence belongs to the class-I aminoacyl-tRNA synthetase family. TyrS type 2 subfamily. As to quaternary structure, homodimer.

The protein localises to the cytoplasm. It carries out the reaction tRNA(Tyr) + L-tyrosine + ATP = L-tyrosyl-tRNA(Tyr) + AMP + diphosphate + H(+). Catalyzes the attachment of tyrosine to tRNA(Tyr) in a two-step reaction: tyrosine is first activated by ATP to form Tyr-AMP and then transferred to the acceptor end of tRNA(Tyr). This Hahella chejuensis (strain KCTC 2396) protein is Tyrosine--tRNA ligase.